Reading from the N-terminus, the 35-residue chain is Unknown protein 14 from 2D-PAGE (35 aa).

A disordered region spans residues 1-35; it reads VVXXQTLXDXRGIYGDQGSIGPXXIXGLQGDRDAD.

The polypeptide is Unknown protein 14 from 2D-PAGE (Bombyx mori (Silk moth)).